Consider the following 255-residue polypeptide: MSKRIVVISDTQIPFDDRKQLKAVVGFIGDTQPDEVVHIGDLMDYPSPSRWTKGSSEEFAQRIKPDSEQAKTRFLAPLRAVYDGPVGVHEGNHDRRPFDYLHKFAPALVEYADQFKFENLLDFDGFGVTVLPEFYKVAPGWISTHGHRGGVRVTQKSADTAYNAMQRFGTSVIIGHTHRQGIKPHTWGYGGHQKVLWSMEVGNLMNMKLAQYLKGATANWQSGFGLLTVDGNHVKPELVPIVGGRFSVDGHVWEV.

The chain is Gene 54 protein (54) from Mycobacterium phage D29 (Mycobacteriophage D29).